The sequence spans 250 residues: MRKPIIAGNWKMNLTLKDAVAFAEEVKGTVPASSKVDAAVCAPSVFLAHLTEATAGTDLKIGAQNMYDQESGAFTGEISPVMLKELGVTYVVLGHSERREYFGETDAFINSKTKKAFEHGLVPIVCVGETLEEREGGKFESVIREQTTNSLKGLTVDQVKNLVVAYEPVWAIGTGKSATEQDAQDSCKFVRDVIAAEFGTEAAEAVRIQYGGSVKPDNIKEYMAQPDIDGALVGGASLETGSFLKLLEAI.

9–11 (NWK) provides a ligand contact to substrate. The Electrophile role is filled by histidine 95. The active-site Proton acceptor is glutamate 167. Substrate is bound by residues glycine 173, serine 213, and 234–235 (GG).

Belongs to the triosephosphate isomerase family. In terms of assembly, homodimer.

The protein localises to the cytoplasm. It catalyses the reaction D-glyceraldehyde 3-phosphate = dihydroxyacetone phosphate. It functions in the pathway carbohydrate biosynthesis; gluconeogenesis. It participates in carbohydrate degradation; glycolysis; D-glyceraldehyde 3-phosphate from glycerone phosphate: step 1/1. Involved in the gluconeogenesis. Catalyzes stereospecifically the conversion of dihydroxyacetone phosphate (DHAP) to D-glyceraldehyde-3-phosphate (G3P). The sequence is that of Triosephosphate isomerase from Exiguobacterium sibiricum (strain DSM 17290 / CCUG 55495 / CIP 109462 / JCM 13490 / 255-15).